The chain runs to 137 residues: Global transcriptional regulator Spx (137 aa).

An intrachain disulfide couples Cys-10 to Cys-13.

The protein belongs to the ArsC family. Spx subfamily. As to quaternary structure, interacts with the C-terminal domain of the alpha subunit of the RNAP.

It localises to the cytoplasm. Its function is as follows. Global transcriptional regulator that plays a key role in stress response and exerts either positive or negative regulation of genes. Acts by interacting with the C-terminal domain of the alpha subunit of the RNA polymerase (RNAP). This interaction can enhance binding of RNAP to the promoter region of target genes and stimulate their transcription, or block interaction of RNAP with activator. The protein is Global transcriptional regulator Spx of Streptococcus mutans serotype c (strain ATCC 700610 / UA159).